The following is a 1277-amino-acid chain: Y' element ATP-dependent helicase YEL077C (1277 aa).

Positions 222 to 399 constitute a Helicase ATP-binding domain; that stretch reads EIYMADTPSV…LQRIGLTGLA (178 aa). 235–242 provides a ligand contact to ATP; it reads APPGYGKT. The short motif at 345–348 is the DEAH box element; it reads DEFH. The Helicase C-terminal domain occupies 454–605; the sequence is ALKLLLALFE…EFYGLESKKG (152 aa). Disordered stretches follow at residues 696–763 and 775–895; these read NVRT…NATT and TTKS…NRFH. Residues 775 to 878 show a composition bias toward low complexity; that stretch reads TTKSINSSTN…ATTTESTNAS (104 aa). A compositionally biased stretch (basic and acidic residues) spans 879 to 895; the sequence is AKEDANKDGNAEDNRFH.

This sequence belongs to the helicase family. Yeast subtelomeric Y' repeat subfamily.

Its function is as follows. Catalyzes DNA unwinding and is involved in telomerase-independent telomere maintenance. This is Y' element ATP-dependent helicase YEL077C from Saccharomyces cerevisiae (strain ATCC 204508 / S288c) (Baker's yeast).